Consider the following 217-residue polypeptide: GTP cyclohydrolase 1 (217 aa).

Residues cysteine 109, histidine 112, and cysteine 180 each contribute to the Zn(2+) site.

Belongs to the GTP cyclohydrolase I family. As to quaternary structure, toroid-shaped homodecamer, composed of two pentamers of five dimers.

The catalysed reaction is GTP + H2O = 7,8-dihydroneopterin 3'-triphosphate + formate + H(+). It functions in the pathway cofactor biosynthesis; 7,8-dihydroneopterin triphosphate biosynthesis; 7,8-dihydroneopterin triphosphate from GTP: step 1/1. In Vibrio vulnificus (strain CMCP6), this protein is GTP cyclohydrolase 1.